The chain runs to 235 residues: Purine nucleoside phosphorylase DeoD-type (235 aa).

A purine D-ribonucleoside is bound at residue His4. Phosphate contacts are provided by residues Gly20, Arg24, Arg43, and 87-90 (RVGT). A purine D-ribonucleoside is bound by residues 179–181 (EME) and 203–204 (SN).

The protein belongs to the PNP/UDP phosphorylase family. In terms of assembly, homohexamer; trimer of homodimers.

It catalyses the reaction a purine D-ribonucleoside + phosphate = a purine nucleobase + alpha-D-ribose 1-phosphate. The enzyme catalyses a purine 2'-deoxy-D-ribonucleoside + phosphate = a purine nucleobase + 2-deoxy-alpha-D-ribose 1-phosphate. Its function is as follows. Catalyzes the reversible phosphorolytic breakdown of the N-glycosidic bond in the beta-(deoxy)ribonucleoside molecules, with the formation of the corresponding free purine bases and pentose-1-phosphate. This chain is Purine nucleoside phosphorylase DeoD-type, found in Levilactobacillus brevis (strain ATCC 367 / BCRC 12310 / CIP 105137 / JCM 1170 / LMG 11437 / NCIMB 947 / NCTC 947) (Lactobacillus brevis).